The primary structure comprises 569 residues: MEVDIRRVALKHALANAVKFGGKARVDSVVSKVFAEVPEARKAAKEVVELVKEVVEEVNSMSPESQASLLSELWPEALSGERKVEVKRLPPLPGAEEVGGKVVTRFAPNPDFVLHLGSARPAILNYYYAKKMYNGKFILRFEDTDPRTKRPMPEAYDLIREDLRWLGTPWDEEYIQSQRMEVYYEVAEALIKSGNAYVCTHSQDEIKAFRDAGKPDPCSFLPPEEHMERWEKMLSGEYPEGAAVLRIKTDPAHPNPSVRDWIAFRVLDTEKTPHPLTGDKYRVWPTYNFACAVDDHMLGVTHVLRGEEHAVNTLKQEYVYRHMGWKPPVSIHFGRMNLEGMVLSKSVIRRGIEKGLFSSIDDIRLGTLRALRRRGILPEAIWDLVLEVGIKPSTARVSVDKLHAFNRKYLEPRANRYMFVPEPAKVASIEGLEAPITAEVIVHPSFPERGRRRITFSKPEVYLPSDVASSMVRLMGLGNFEVVDGGSKLRYLNNDVSFAKKHELPIVQWAPVESSVRGRVLKAAGTKIEEISGYGEPSLAELPPGEQVQFVRLGFVRVEGPETYIFTHD.

A 'HIGH' region motif is present at residues 108–118; it reads PNPDFVLHLGS.

This sequence belongs to the class-I aminoacyl-tRNA synthetase family. Glutamate--tRNA ligase type 2 subfamily.

Its subcellular location is the cytoplasm. The enzyme catalyses tRNA(Glu) + L-glutamate + ATP = L-glutamyl-tRNA(Glu) + AMP + diphosphate. Functionally, catalyzes the attachment of glutamate to tRNA(Glu) in a two-step reaction: glutamate is first activated by ATP to form Glu-AMP and then transferred to the acceptor end of tRNA(Glu). This chain is Glutamate--tRNA ligase, found in Thermofilum pendens (strain DSM 2475 / Hrk 5).